The sequence spans 288 residues: Adenylate kinase (288 aa).

65 to 70 (GVGKGT) contributes to the ATP binding site. Positions 85–114 (ATGDLVRDELKSSGPLSKQLAEIVNQGKLV) are NMP. AMP-binding positions include Thr-86, Arg-91, 112–114 (KLV), 142–145 (GFPR), and Gln-149. The tract at residues 178 to 226 (GRRICSECGKNFNVASIDVAGENGAPRISMARLNPPFTVCFKLITRADD) is LID. Arg-179 contributes to the ATP binding site. Positions 223 and 234 each coordinate AMP. Gly-262 serves as a coordination point for ATP.

This sequence belongs to the adenylate kinase family. As to quaternary structure, monomer.

The protein resides in the cytoplasm. The catalysed reaction is AMP + ATP = 2 ADP. Catalyzes the reversible transfer of the terminal phosphate group between ATP and AMP. Plays an important role in cellular energy homeostasis and in adenine nucleotide metabolism. This is Adenylate kinase (ADK) from Solanum tuberosum (Potato).